A 417-amino-acid chain; its full sequence is MSSKYPRSVRCCLPLWALTLEAALILLFFFFTYYDASLEDQKGLVASYQVCQDLTVMAVLGLGFFTSNLRRNSWSSVAFNLFLLALGVQWAILLDGFLSQFSPGKVAIKLFSIRLATRSTMSMLISMNAVLGKVNLVQLVVMELVELTVFGTMRIVINNIFKIDYGMNMMHIHVFAAYFGLTVAWCLPKPLPKGTEDKYQTTTSPSLFAMLGTLFLWMFWPTFNSALLLNPIERKNAVFSTYYALAVSAVTAISVSSLAHPGGKINMTYMHNAALAGGVALSASCHVIHSPWIAMVLGLVAGLISIGGAKCLPVCFNRVLGIHESHSVHYTFGLPALLGEITYIVLMALRVVWASSNMIGFQVLLSTGTLSLAMAMSITSGLLTGLLLNLKIWKGPHVAKYFDDQAFWEFPHLAVGF.

The next 11 helical transmembrane spans lie at 12 to 32, 44 to 64, 77 to 97, 125 to 145, 172 to 192, 203 to 223, 238 to 258, 265 to 285, 287 to 307, 331 to 351, and 358 to 378; these read CLPL…FFFT, LVAS…GLGF, VAFN…LDGF, ISMN…MELV, IHVF…KPLP, TSPS…WPTF, VFST…VSSL, INMT…SASC, VIHS…ISIG, TFGL…ALRV, and MIGF…AMSI.

Belongs to the ammonium transporter (TC 2.A.49) family. Rh subfamily.

The protein localises to the membrane. Its function is as follows. May be part of an oligomeric complex which is likely to have a transport or channel function in the erythrocyte membrane. This chain is RH-like protein, found in Macaca mulatta (Rhesus macaque).